The chain runs to 90 residues: Probable Fe(2+)-trafficking protein (90 aa).

This sequence belongs to the Fe(2+)-trafficking protein family.

In terms of biological role, could be a mediator in iron transactions between iron acquisition and iron-requiring processes, such as synthesis and/or repair of Fe-S clusters in biosynthetic enzymes. This Aeromonas hydrophila subsp. hydrophila (strain ATCC 7966 / DSM 30187 / BCRC 13018 / CCUG 14551 / JCM 1027 / KCTC 2358 / NCIMB 9240 / NCTC 8049) protein is Probable Fe(2+)-trafficking protein.